Reading from the N-terminus, the 346-residue chain is Hexosaminidase D (346 aa).

E141 (proton donor) is an active-site residue.

This sequence belongs to the glycosyl hydrolase 20 family. Homodimer; disulfide-linked.

Its subcellular location is the cytoplasm. It localises to the nucleus. The protein resides in the extracellular vesicle. It carries out the reaction Hydrolysis of terminal non-reducing N-acetyl-D-hexosamine residues in N-acetyl-beta-D-hexosaminides.. Inhibited by O-(2-acetamido-2-deoxy-D-glucopyranosylidene)amino N-phenylcarbamate (PUGNAc). Inhibited by galacto-NAG-thiazoline. In terms of biological role, has hexosaminidase activity. Responsible for the cleavage of the monosaccharides N-acetylglucosamine (GlcNAc) and N-acetylgalactosamine (GalNAc) from cellular substrates. Has a preference for galactosaminide over glucosaminide substrates. In Bos taurus (Bovine), this protein is Hexosaminidase D.